The following is a 231-amino-acid chain: 2-C-methyl-D-erythritol 4-phosphate cytidylyltransferase (231 aa).

This sequence belongs to the IspD/TarI cytidylyltransferase family. IspD subfamily.

It carries out the reaction 2-C-methyl-D-erythritol 4-phosphate + CTP + H(+) = 4-CDP-2-C-methyl-D-erythritol + diphosphate. It functions in the pathway isoprenoid biosynthesis; isopentenyl diphosphate biosynthesis via DXP pathway; isopentenyl diphosphate from 1-deoxy-D-xylulose 5-phosphate: step 2/6. Its function is as follows. Catalyzes the formation of 4-diphosphocytidyl-2-C-methyl-D-erythritol from CTP and 2-C-methyl-D-erythritol 4-phosphate (MEP). The protein is 2-C-methyl-D-erythritol 4-phosphate cytidylyltransferase of Dictyoglomus thermophilum (strain ATCC 35947 / DSM 3960 / H-6-12).